The following is a 356-amino-acid chain: MADAATIAKLEEGFKKLEAATDCKSLLKKYLSKDIFDSLKAKKTSLGATLLDVIQSGVENLDSGVGIYAPDAEAYSLFAPLFDPIIEDYHKGFKQTDKHPAKDFGDVSKFINVDPEGTFVISTRVRCGRSMEGYPFNPCLTEAQYKEMEEKVSSTLSGLEGELKGSYFPLTGMTKEVQQKLIDDHFLFKEGDRFLQAANACRYWPAGRGIYHNDNKTFLVWCNEEDHLRIISMQMGGDLGQVYRRLVSAVNDIEKRVPFSHHDRLGFLTFCPTNLGTTVRASVHIKLPKLAANREKLEEVAAKFSLQVRGTRGEHTEAEGGIYDISNKRRMGLTEFQAVKEMQDGILELIKIEKEM.

The residue at position 2 (Ala2) is an N-acetylalanine. A Phosphagen kinase N-terminal domain is found at 9–91; the sequence is KLEEGFKKLE…FDPIIEDYHK (83 aa). An L-arginine-binding site is contributed by 64–68; it reads GVGIY. Positions 119-356 constitute a Phosphagen kinase C-terminal domain; sequence FVISTRVRCG…LELIKIEKEM (238 aa). ATP-binding positions include 122–126 and His185; that span reads STRVR. Glu225 contacts L-arginine. Residue Arg229 coordinates ATP. Residue Cys271 coordinates L-arginine. ATP-binding positions include 280–284 and 309–314; these read RASVH and RGTRGE. Glu314 lines the L-arginine pocket.

It belongs to the ATP:guanido phosphotransferase family.

The enzyme catalyses L-arginine + ATP = N(omega)-phospho-L-arginine + ADP + H(+). The chain is Arginine kinase from Homarus gammarus (European lobster).